Here is a 193-residue protein sequence, read N- to C-terminus: Adenine phosphoribosyltransferase (193 aa).

Belongs to the purine/pyrimidine phosphoribosyltransferase family. In terms of assembly, homodimer.

The protein localises to the cytoplasm. The catalysed reaction is AMP + diphosphate = 5-phospho-alpha-D-ribose 1-diphosphate + adenine. It functions in the pathway purine metabolism; AMP biosynthesis via salvage pathway; AMP from adenine: step 1/1. Catalyzes a salvage reaction resulting in the formation of AMP, that is energically less costly than de novo synthesis. This chain is Adenine phosphoribosyltransferase, found in Bifidobacterium longum subsp. infantis (strain ATCC 15697 / DSM 20088 / JCM 1222 / NCTC 11817 / S12).